The following is a 553-amino-acid chain: 2-succinyl-5-enolpyruvyl-6-hydroxy-3-cyclohexene-1-carboxylate synthase (553 aa).

The protein belongs to the TPP enzyme family. MenD subfamily. As to quaternary structure, homodimer. It depends on Mg(2+) as a cofactor. The cofactor is Mn(2+). Thiamine diphosphate is required as a cofactor.

It carries out the reaction isochorismate + 2-oxoglutarate + H(+) = 5-enolpyruvoyl-6-hydroxy-2-succinyl-cyclohex-3-ene-1-carboxylate + CO2. It participates in quinol/quinone metabolism; 1,4-dihydroxy-2-naphthoate biosynthesis; 1,4-dihydroxy-2-naphthoate from chorismate: step 2/7. It functions in the pathway quinol/quinone metabolism; menaquinone biosynthesis. Its function is as follows. Catalyzes the thiamine diphosphate-dependent decarboxylation of 2-oxoglutarate and the subsequent addition of the resulting succinic semialdehyde-thiamine pyrophosphate anion to isochorismate to yield 2-succinyl-5-enolpyruvyl-6-hydroxy-3-cyclohexene-1-carboxylate (SEPHCHC). In Thermobifida fusca (strain YX), this protein is 2-succinyl-5-enolpyruvyl-6-hydroxy-3-cyclohexene-1-carboxylate synthase.